The sequence spans 283 residues: Phosphate import ATP-binding protein PstB 2 (283 aa).

The ABC transporter domain maps to 36-278 (LQVKQFNFYY…PKKKQTEDYI (243 aa)). Position 69 to 76 (69 to 76 (GPSGCGKS)) interacts with ATP.

The protein belongs to the ABC transporter superfamily. Phosphate importer (TC 3.A.1.7) family. In terms of assembly, the complex is composed of two ATP-binding proteins (PstB), two transmembrane proteins (PstC and PstA) and a solute-binding protein (PstS).

It is found in the cell inner membrane. The enzyme catalyses phosphate(out) + ATP + H2O = ADP + 2 phosphate(in) + H(+). In terms of biological role, part of the ABC transporter complex PstSACB involved in phosphate import. Responsible for energy coupling to the transport system. In Nitrosococcus oceani (strain ATCC 19707 / BCRC 17464 / JCM 30415 / NCIMB 11848 / C-107), this protein is Phosphate import ATP-binding protein PstB 2.